The following is a 310-amino-acid chain: tRNA pseudouridine synthase B (310 aa).

Residue D47 is the Nucleophile of the active site.

It belongs to the pseudouridine synthase TruB family. Type 1 subfamily.

It carries out the reaction uridine(55) in tRNA = pseudouridine(55) in tRNA. Responsible for synthesis of pseudouridine from uracil-55 in the psi GC loop of transfer RNAs. This chain is tRNA pseudouridine synthase B, found in Caulobacter vibrioides (strain ATCC 19089 / CIP 103742 / CB 15) (Caulobacter crescentus).